A 165-amino-acid polypeptide reads, in one-letter code: Protein-export protein SecB (165 aa).

Belongs to the SecB family. In terms of assembly, homotetramer, a dimer of dimers. One homotetramer interacts with 1 SecA dimer.

Its subcellular location is the cytoplasm. Its function is as follows. One of the proteins required for the normal export of preproteins out of the cell cytoplasm. It is a molecular chaperone that binds to a subset of precursor proteins, maintaining them in a translocation-competent state. It also specifically binds to its receptor SecA. In Colwellia psychrerythraea (strain 34H / ATCC BAA-681) (Vibrio psychroerythus), this protein is Protein-export protein SecB.